The chain runs to 555 residues: Neurofilament light polypeptide (555 aa).

Serine 2 is modified (N-acetylserine). The interval 2–93 (SSFSYEPYYS…KSIRTQEKAQ (92 aa)) is head. At arginine 23 the chain carries Asymmetric dimethylarginine; alternate. Residue arginine 23 is modified to Omega-N-methylarginine; alternate. The residue at position 30 (arginine 30) is an Omega-N-methylarginine. Residue tyrosine 43 is modified to Phosphotyrosine. Serine 56, serine 67, and serine 103 each carry phosphoserine. The IF rod domain occupies 90–401 (EKAQLQDLND…KLLEGEETRL (312 aa)). A coil 1A region spans residues 94–125 (LQDLNDRFASFIERVHELEQQNKVLEAELLVL). Positions 126-138 (RQKHSEPSRFRAL) are linker 1. Residues 139 to 234 (YEQEIRDLRL…KVHEEEIAEL (96 aa)) form a coil 1B region. Positions 235 to 253 (QAQIQYAQISVEMDVSSKP) are linker 12. Residues 254–272 (DLSAALKDIRAQYEKLAAK) are coil 2A. Positions 273–281 (NMQNAEEWF) are linker 2. The segment at 282 to 397 (KSRFTVLTES…AAYRKLLEGE (116 aa)) is coil 2B. Residues 398–444 (ETRLSFTSVGSLTTGYTQSSQVFGRSAYGGLQTSSYLMSARSFPSYY) are tail, subdomain A. A tail region spans residues 398–555 (ETRLSFTSVG…GEEQATKKKD (158 aa)). The segment at 445-555 (TSHVQEEQIE…GEEQATKKKD (111 aa)) is tail, subdomain B (acidic). The interval 463-555 (KAEEAKDEPP…GEEQATKKKD (93 aa)) is disordered. Over residues 472 to 540 (PSEGEAEEEE…ETKEAEEEEK (69 aa)) the composition is skewed to acidic residues. Residue serine 473 is modified to Phosphoserine. Phosphothreonine is present on threonine 532. Over residues 541–555 (KDEGAGEEQATKKKD) the composition is skewed to basic and acidic residues.

It belongs to the intermediate filament family. As to quaternary structure, forms homodimers (in vitro). Forms heterodimers with NEFH or NEFM; which can further hetero-oligomerize (in vitro). Forms heterodimers with INA (in vitro). Interacts with ARHGEF28. Interacts with TRIM2. O-glycosylated. In terms of processing, phosphorylated in the head and rod regions by the PKC kinase PKN1, leading to the inhibition of polymerization. Post-translationally, ubiquitinated in the presence of TRIM2 and UBE2D1.

It localises to the cell projection. The protein localises to the axon. It is found in the cytoplasm. The protein resides in the cytoskeleton. In terms of biological role, neurofilaments usually contain three intermediate filament proteins: NEFL, NEFM, and NEFH which are involved in the maintenance of neuronal caliber. May additionally cooperate with the neuronal intermediate filament proteins PRPH and INA to form neuronal filamentous networks. The chain is Neurofilament light polypeptide (NEFL) from Bos taurus (Bovine).